A 1036-amino-acid polypeptide reads, in one-letter code: Presequence protease, mitochondrial (1036 aa).

A mitochondrion-targeting transit peptide spans 1–15; the sequence is MWRFSGRRGLCAVQR. His104 is a binding site for Zn(2+). Glu107 (proton acceptor) is an active-site residue. Zn(2+) contacts are provided by His108 and Glu205. Residues Cys119 and Cys556 are joined by a disulfide bond. Lys759 carries the post-translational modification N6-acetyllysine. An N6-acetyllysine; alternate modification is found at Lys770. The residue at position 770 (Lys770) is an N6-succinyllysine; alternate. The tract at residues 806–833 is disordered; that stretch reads SKKERKPVRPHIVEKPTPSGPSGAAHVS. N6-succinyllysine is present on Lys848. At Lys883 the chain carries N6-acetyllysine. Residue Lys945 is modified to N6-succinyllysine.

The protein belongs to the peptidase M16 family. PreP subfamily. As to quaternary structure, monomer and homodimer; homodimerization is induced by binding of the substrate. The cofactor is Zn(2+). A disulfide bond locks the enzyme in the closed conformation preventing substrate entry into the catalytic chamber.

It is found in the mitochondrion matrix. With respect to regulation, mainly exists in a closed and catalytically competent conformation but a closed-to-open switch allows substrate entry into the catalytic chamber. Substrate binding induces closure and dimerization. A disulfide bond may lock the enzyme in a closed conformation preventing substrate entry into the catalytic chamber, participating in redox regulation of the enzyme. Inhibited by metal-chelating agents. Inhibited by nickel and zinc excess, and slightly activated by manganese. In terms of biological role, metalloendopeptidase of the mitochondrial matrix that functions in peptide cleavage and degradation rather than in protein processing. Has an ATP-independent activity. Specifically cleaves peptides in the range of 5 to 65 residues. Shows a preference for cleavage after small polar residues and before basic residues, but without any positional preference. Degrades the transit peptides of mitochondrial proteins after their cleavage. Also degrades other unstructured peptides. It is also able to degrade amyloid-beta protein 40, one of the peptides produced by APP processing, when it accumulates in mitochondrion. It is a highly efficient protease, at least toward amyloid-beta protein 40. Cleaves that peptide at a specific position and is probably not processive, releasing digested peptides intermediates that can be further cleaved subsequently. It is also able to degrade amyloid-beta protein 42. The protein is Presequence protease, mitochondrial of Mus musculus (Mouse).